Here is an 81-residue protein sequence, read N- to C-terminus: MSHAVKIYDTCIGCTQCVRACPLDVLEMVPWDGCKAGQIASSPRTEDCVGCKRCETACPTDFLSIRVYLGDETTRSMGLAY.

2 consecutive 4Fe-4S ferredoxin-type domains span residues 2–31 (SHAVKIYDTCIGCTQCVRACPLDVLEMVPW) and 37–68 (GQIASSPRTEDCVGCKRCETACPTDFLSIRVY). Positions 11, 14, 17, 21, 48, 51, 54, and 58 each coordinate [4Fe-4S] cluster.

As to quaternary structure, the cyanobacterial PSI reaction center is composed of one copy each of PsaA,B,C,D,E,F,I,J,K,L,M and X, and forms trimeric complexes. The cofactor is [4Fe-4S] cluster.

It is found in the cellular thylakoid membrane. It catalyses the reaction reduced [plastocyanin] + hnu + oxidized [2Fe-2S]-[ferredoxin] = oxidized [plastocyanin] + reduced [2Fe-2S]-[ferredoxin]. Its function is as follows. Apoprotein for the two 4Fe-4S centers FA and FB of photosystem I (PSI); essential for photochemical activity. FB is the terminal electron acceptor of PSI, donating electrons to ferredoxin. The C-terminus interacts with PsaA/B/D and helps assemble the protein into the PSI complex. Required for binding of PsaD and PsaE to PSI. PSI is a plastocyanin/cytochrome c6-ferredoxin oxidoreductase, converting photonic excitation into a charge separation, which transfers an electron from the donor P700 chlorophyll pair to the spectroscopically characterized acceptors A0, A1, FX, FA and FB in turn. This is Photosystem I iron-sulfur center from Synechococcus sp. (strain WH8103).